The sequence spans 385 residues: 8-amino-7-oxononanoate synthase (385 aa).

R21 contributes to the substrate binding site. 108–109 is a pyridoxal 5'-phosphate binding site; the sequence is GF. H133 contributes to the substrate binding site. S179, H207, and T233 together coordinate pyridoxal 5'-phosphate. K236 carries the N6-(pyridoxal phosphate)lysine modification. Substrate is bound at residue T352.

Belongs to the class-II pyridoxal-phosphate-dependent aminotransferase family. BioF subfamily. Homodimer. The cofactor is pyridoxal 5'-phosphate.

It carries out the reaction 6-carboxyhexanoyl-[ACP] + L-alanine + H(+) = (8S)-8-amino-7-oxononanoate + holo-[ACP] + CO2. It functions in the pathway cofactor biosynthesis; biotin biosynthesis. Its function is as follows. Catalyzes the decarboxylative condensation of pimeloyl-[acyl-carrier protein] and L-alanine to produce 8-amino-7-oxononanoate (AON), [acyl-carrier protein], and carbon dioxide. This chain is 8-amino-7-oxononanoate synthase, found in Salmonella schwarzengrund (strain CVM19633).